A 299-amino-acid chain; its full sequence is ATP phosphoribosyltransferase (299 aa).

Belongs to the ATP phosphoribosyltransferase family. Long subfamily. Equilibrium between an active dimeric form, an inactive hexameric form and higher aggregates. Interconversion between the various forms is largely reversible and is influenced by the natural substrates and inhibitors of the enzyme. Mg(2+) is required as a cofactor.

It localises to the cytoplasm. The enzyme catalyses 1-(5-phospho-beta-D-ribosyl)-ATP + diphosphate = 5-phospho-alpha-D-ribose 1-diphosphate + ATP. It functions in the pathway amino-acid biosynthesis; L-histidine biosynthesis; L-histidine from 5-phospho-alpha-D-ribose 1-diphosphate: step 1/9. With respect to regulation, feedback inhibited by histidine. Functionally, catalyzes the condensation of ATP and 5-phosphoribose 1-diphosphate to form N'-(5'-phosphoribosyl)-ATP (PR-ATP). Has a crucial role in the pathway because the rate of histidine biosynthesis seems to be controlled primarily by regulation of HisG enzymatic activity. In Escherichia fergusonii (strain ATCC 35469 / DSM 13698 / CCUG 18766 / IAM 14443 / JCM 21226 / LMG 7866 / NBRC 102419 / NCTC 12128 / CDC 0568-73), this protein is ATP phosphoribosyltransferase.